The primary structure comprises 230 residues: UPF0173 metal-dependent hydrolase RHOS4_08540 (230 aa).

The protein belongs to the UPF0173 family.

This Cereibacter sphaeroides (strain ATCC 17023 / DSM 158 / JCM 6121 / CCUG 31486 / LMG 2827 / NBRC 12203 / NCIMB 8253 / ATH 2.4.1.) (Rhodobacter sphaeroides) protein is UPF0173 metal-dependent hydrolase RHOS4_08540.